Consider the following 1460-residue polypeptide: DNA-directed RNA polymerase III subunit RPC1 (1460 aa).

Positions 67, 70, 77, 80, 107, 110, and 154 each coordinate Zn(2+). Positions 511, 513, and 515 each coordinate Mg(2+). The segment at 858–870 is bridging helix; sequence PPEFLFHAISGRE.

This sequence belongs to the RNA polymerase beta' chain family. Component of the RNA polymerase III (Pol III) complex consisting of 17 subunits.

The protein resides in the nucleus. It carries out the reaction RNA(n) + a ribonucleoside 5'-triphosphate = RNA(n+1) + diphosphate. In terms of biological role, DNA-dependent RNA polymerase catalyzes the transcription of DNA into RNA using the four ribonucleoside triphosphates as substrates. Largest and catalytic core component of RNA polymerase III which synthesizes small RNAs, such as 5S rRNA and tRNAs. Forms the polymerase active center together with the second largest subunit. A single-stranded DNA template strand of the promoter is positioned within the central active site cleft of Pol III. A bridging helix emanates from RPC1 and crosses the cleft near the catalytic site and is thought to promote translocation of Pol III by acting as a ratchet that moves the RNA-DNA hybrid through the active site by switching from straight to bent conformations at each step of nucleotide addition. This Saccharomyces cerevisiae (strain ATCC 204508 / S288c) (Baker's yeast) protein is DNA-directed RNA polymerase III subunit RPC1 (RPO31).